The primary structure comprises 62 residues: Alkaline proteinase (62 aa).

A Peptidase S8 domain is found at 1 to 62 (GSTSYIYDTS…FAPGTSVLSS (62 aa)). Residue Asp21 is the Charge relay system of the active site.

It is found in the secreted. Its activity is regulated as follows. Inhibited by phenylmethanesulfonyl fluoride (PMSF) and chymostatin (CST), but not by Bowman-Birk type trypsin-chymotrypsin inhibitor (BBI). Its function is as follows. Serine protease. May be involved in the invasion of grains and hydrolysis of grain proteins. The protein is Alkaline proteinase of Fusarium culmorum.